The primary structure comprises 316 residues: Ribosomal RNA small subunit methyltransferase H (316 aa).

Residues 35–37 (AGH), D55, F84, D105, and Q112 contribute to the S-adenosyl-L-methionine site.

The protein belongs to the methyltransferase superfamily. RsmH family.

It localises to the cytoplasm. The catalysed reaction is cytidine(1402) in 16S rRNA + S-adenosyl-L-methionine = N(4)-methylcytidine(1402) in 16S rRNA + S-adenosyl-L-homocysteine + H(+). Its function is as follows. Specifically methylates the N4 position of cytidine in position 1402 (C1402) of 16S rRNA. This Streptococcus thermophilus (strain ATCC BAA-250 / LMG 18311) protein is Ribosomal RNA small subunit methyltransferase H.